The following is a 386-amino-acid chain: Methylthioribose-1-phosphate isomerase (386 aa).

Catalysis depends on aspartate 258, which acts as the Proton donor.

The protein belongs to the eIF-2B alpha/beta/delta subunits family. MtnA subfamily.

The protein localises to the cytoplasm. It is found in the nucleus. It carries out the reaction 5-(methylsulfanyl)-alpha-D-ribose 1-phosphate = 5-(methylsulfanyl)-D-ribulose 1-phosphate. The protein operates within amino-acid biosynthesis; L-methionine biosynthesis via salvage pathway; L-methionine from S-methyl-5-thio-alpha-D-ribose 1-phosphate: step 1/6. Catalyzes the interconversion of methylthioribose-1-phosphate (MTR-1-P) into methylthioribulose-1-phosphate (MTRu-1-P). This chain is Methylthioribose-1-phosphate isomerase, found in Postia placenta (strain ATCC 44394 / Madison 698-R) (Brown rot fungus).